The chain runs to 86 residues: Insulin (86 aa).

3 disulfide bridges follow: Cys7–Cys72, Cys19–Cys85, and Cys71–Cys76. Residues 33–63 (ELEDPQVGQADPGVVPEAGRLQPLALEMTLQ) constitute a propeptide, c peptide.

This sequence belongs to the insulin family. As to quaternary structure, heterodimer of a B chain and an A chain linked by two disulfide bonds.

It localises to the secreted. Functionally, insulin decreases blood glucose concentration. It increases cell permeability to monosaccharides, amino acids and fatty acids. It accelerates glycolysis, the pentose phosphate cycle, and glycogen synthesis in liver. This chain is Insulin (INS), found in Chinchilla chinchilla (Short-tailed chinchilla).